Here is a 227-residue protein sequence, read N- to C-terminus: N-acetyltransferase family 8 member 7 (227 aa).

Helical transmembrane passes span 36–56 (MLLL…LFLA) and 58–78 (GSWL…WFLA). The 160-residue stretch at 61-220 (LLVLLSILTL…PMINLKYSLT (160 aa)) folds into the N-acetyltransferase domain.

Belongs to the camello family.

It localises to the membrane. It catalyses the reaction L-lysyl-[protein] + acetyl-CoA = N(6)-acetyl-L-lysyl-[protein] + CoA + H(+). Has histone acetyltransferase activity in vitro, with specificity for histone H4. The polypeptide is N-acetyltransferase family 8 member 7 (Mus musculus (Mouse)).